The following is a 214-amino-acid chain: tRNA (guanine-N(7)-)-methyltransferase (214 aa).

4 residues coordinate S-adenosyl-L-methionine: E44, E69, D96, and D118. Residue D118 is part of the active site. Substrate-binding positions include K122, D154, and 191-194; that span reads TEYE.

The protein belongs to the class I-like SAM-binding methyltransferase superfamily. TrmB family.

The enzyme catalyses guanosine(46) in tRNA + S-adenosyl-L-methionine = N(7)-methylguanosine(46) in tRNA + S-adenosyl-L-homocysteine. The protein operates within tRNA modification; N(7)-methylguanine-tRNA biosynthesis. Catalyzes the formation of N(7)-methylguanine at position 46 (m7G46) in tRNA. The sequence is that of tRNA (guanine-N(7)-)-methyltransferase from Listeria monocytogenes serotype 4a (strain HCC23).